The sequence spans 595 residues: (E)-beta-ocimene synthase, chloroplastic (595 aa).

The N-terminal 32 residues, 1–32 (MSTISINLMSIIRNPLHSKSKRALINKHPSSS), are a transit peptide targeting the chloroplast. The Mn(2+) site is built by D350 and D354. The DDXXD motif motif lies at 350 to 354 (DDVYD). Homodimerization regions lie at residues 356–362 (YGTLDEL) and 428–465 (EEEW…LSIP). Mn(2+) contacts are provided by N493 and E501.

This sequence belongs to the terpene synthase family. In terms of assembly, homodimer. Mn(2+) serves as cofactor. Mg(2+) is required as a cofactor. In terms of tissue distribution, expressed in peltate glandular trichomes. Present in flowers, leaves and stems.

Its subcellular location is the plastid. It is found in the chloroplast. The enzyme catalyses (2E)-geranyl diphosphate = (E)-beta-ocimene + diphosphate. It functions in the pathway secondary metabolite biosynthesis; terpenoid biosynthesis. In terms of biological role, involved in the biosynthesis of monoterpenes natural products. Monoterpene synthase that catalyzes mainly the formation of (E)-beta-ocimene and minor amounts of other monoterpenes (e.g. myrcene, (Z)-beta-ocimene, alpha- and gamma-terpinene) from geranyl diphosphate (GPP). The polypeptide is (E)-beta-ocimene synthase, chloroplastic (Origanum vulgare (Wild marjoram)).